Reading from the N-terminus, the 333-residue chain is 5-formaminoimidazole-4-carboxamide-1-(beta)-D-ribofuranosyl 5'-monophosphate synthetase (333 aa).

5-amino-1-(5-phospho-beta-D-ribosyl)imidazole-4-carboxamide-binding residues include His20 and Ser85. Residues 106 to 313 (RELIKWEADQ…YFDRPMDMGE (208 aa)) form the ATP-grasp domain. ATP is bound by residues 136 to 187 (PEEV…VPAY) and Glu209. Residue Asn229 coordinates 5-amino-1-(5-phospho-beta-D-ribosyl)imidazole-4-carboxamide. Mg(2+) is bound by residues Glu268 and Glu281.

It belongs to the phosphohexose mutase family. It depends on Mg(2+) as a cofactor. The cofactor is Mn(2+).

It carries out the reaction 5-amino-1-(5-phospho-beta-D-ribosyl)imidazole-4-carboxamide + formate + ATP = 5-formamido-1-(5-phospho-D-ribosyl)imidazole-4-carboxamide + ADP + phosphate. Its pathway is purine metabolism; IMP biosynthesis via de novo pathway; 5-formamido-1-(5-phospho-D-ribosyl)imidazole-4-carboxamide from 5-amino-1-(5-phospho-D-ribosyl)imidazole-4-carboxamide (formate route): step 1/1. Functionally, catalyzes the ATP- and formate-dependent formylation of 5-aminoimidazole-4-carboxamide-1-beta-d-ribofuranosyl 5'-monophosphate (AICAR) to 5-formaminoimidazole-4-carboxamide-1-beta-d-ribofuranosyl 5'-monophosphate (FAICAR) in the absence of folates. This Pyrobaculum islandicum (strain DSM 4184 / JCM 9189 / GEO3) protein is 5-formaminoimidazole-4-carboxamide-1-(beta)-D-ribofuranosyl 5'-monophosphate synthetase.